The following is a 650-amino-acid chain: Exonuclease 3'-5' domain-containing protein 2 (650 aa).

Residues Met1 to Leu6 lie on the Mitochondrial intermembrane side of the membrane. The helical transmembrane segment at Val7–Gln29 threads the bilayer. The Cytoplasmic portion of the chain corresponds to Arg30 to Ser650. Residues Lys34–Phe89 form a disordered region. Residues Pro49 to Pro67 are compositionally biased toward pro residues. A divalent metal cation contacts are provided by Asp137, Glu139, and Asp275. Positions Ile184–Ala276 constitute a 3'-5' exonuclease domain. Positions Ser340–Gly373 are disordered.

The protein belongs to the EXD2 family. As to quaternary structure, homodimer. Interacts with RBBP8, MRE11 and BRCA1. The cofactor is Mg(2+). Mn(2+) is required as a cofactor.

The protein resides in the mitochondrion outer membrane. Its subcellular location is the mitochondrion matrix. It is found in the nucleus. It localises to the chromosome. It catalyses the reaction Exonucleolytic cleavage in the 3'- to 5'-direction to yield nucleoside 5'-phosphates.. Exonuclease that has both 3'-5' exoribonuclease and exodeoxyribonuclease activities, depending on the divalent metal cation used as cofactor. In presence of Mg(2+), only shows 3'-5' exoribonuclease activity, while it shows both exoribonuclease and exodeoxyribonuclease activities in presence of Mn(2+). Acts as an exoribonuclease in mitochondrion, possibly by regulating ATP production and mitochondrial translation. Also involved in the response to DNA damage. Acts as 3'-5' exodeoxyribonuclease for double-strand breaks resection and efficient homologous recombination. Plays a key role in controlling the initial steps of chromosomal break repair, it is recruited to chromatin in a damage-dependent manner and functionally interacts with the MRN complex to accelerate resection through its 3'-5' exonuclease activity, which efficiently processes double-stranded DNA substrates containing nicks. Also involved in response to replicative stress: recruited to stalled forks and is required to stabilize and restart stalled replication forks by restraining excessive fork regression, thereby suppressing their degradation. The protein is Exonuclease 3'-5' domain-containing protein 2 of Mus musculus (Mouse).